The following is a 153-amino-acid chain: Large ribosomal subunit protein uL30 (153 aa).

It belongs to the universal ribosomal protein uL30 family. In terms of assembly, part of the 50S ribosomal subunit.

In Methanosarcina barkeri (strain Fusaro / DSM 804), this protein is Large ribosomal subunit protein uL30.